The primary structure comprises 151 residues: Small ribosomal subunit protein uS11 (151 aa).

The tract at residues 131 to 151 (DVTPVPSDSTRRKGGRRGRRL) is disordered. Residues 142–151 (RKGGRRGRRL) show a composition bias toward basic residues.

The protein belongs to the universal ribosomal protein uS11 family.

This is Small ribosomal subunit protein uS11 from Bombyx mori (Silk moth).